Reading from the N-terminus, the 347-residue chain is Methylthioribose-1-phosphate isomerase (347 aa).

Residues 45–47 (RGA), R88, and Q197 each bind substrate. D238 serves as the catalytic Proton donor. 248–249 (NK) provides a ligand contact to substrate.

Belongs to the eIF-2B alpha/beta/delta subunits family. MtnA subfamily.

The catalysed reaction is 5-(methylsulfanyl)-alpha-D-ribose 1-phosphate = 5-(methylsulfanyl)-D-ribulose 1-phosphate. The protein operates within amino-acid biosynthesis; L-methionine biosynthesis via salvage pathway; L-methionine from S-methyl-5-thio-alpha-D-ribose 1-phosphate: step 1/6. Catalyzes the interconversion of methylthioribose-1-phosphate (MTR-1-P) into methylthioribulose-1-phosphate (MTRu-1-P). The protein is Methylthioribose-1-phosphate isomerase of Trichormus variabilis (strain ATCC 29413 / PCC 7937) (Anabaena variabilis).